Here is a 231-residue protein sequence, read N- to C-terminus: Ion-translocating oxidoreductase complex subunit E (231 aa).

6 helical membrane passes run 18-38, 39-59, 63-83, 86-106, 125-145, and 182-202; these read ALVQ…ATNA, LGLG…ISTL, TPAE…VSAV, LINA…PLIV, ALSA…MFVL, and PFLL…MLAG.

This sequence belongs to the NqrDE/RnfAE family. In terms of assembly, the complex is composed of six subunits: RsxA, RsxB, RsxC, RsxD, RsxE and RsxG.

Its subcellular location is the cell inner membrane. Functionally, part of a membrane-bound complex that couples electron transfer with translocation of ions across the membrane. Required to maintain the reduced state of SoxR. The sequence is that of Ion-translocating oxidoreductase complex subunit E from Escherichia coli (strain SE11).